We begin with the raw amino-acid sequence, 261 residues long: GTP cyclohydrolase FolE2 (261 aa).

This sequence belongs to the GTP cyclohydrolase IV family.

It catalyses the reaction GTP + H2O = 7,8-dihydroneopterin 3'-triphosphate + formate + H(+). The protein operates within cofactor biosynthesis; 7,8-dihydroneopterin triphosphate biosynthesis; 7,8-dihydroneopterin triphosphate from GTP: step 1/1. Functionally, converts GTP to 7,8-dihydroneopterin triphosphate. The polypeptide is GTP cyclohydrolase FolE2 (Fervidobacterium nodosum (strain ATCC 35602 / DSM 5306 / Rt17-B1)).